The following is a 140-amino-acid chain: uncharacterized protein (140 aa).

2 consecutive transmembrane segments (helical) span residues 63 to 83 and 119 to 139; these read LGFV…TLAT and ILLY…IFIN.

Its subcellular location is the membrane. This is an uncharacterized protein from Schizosaccharomyces pombe (strain 972 / ATCC 24843) (Fission yeast).